Here is a 493-residue protein sequence, read N- to C-terminus: EGF-containing fibulin-like extracellular matrix protein 1 (493 aa).

Positions 1–17 (MLQTLFLTMLTLALVKS) are cleaved as a signal peptide. The region spanning 26–71 (YTQCTDGYEWDPIRQQCKDIDECDIVPDACKGGMKCVNHYGGYLCL) is the EGF-like 1; atypical domain. In terms of domain architecture, EGF-like 2; calcium-binding spans 173–213 (DIDECTSGTHNCRTDQVCINLRGSFTCQCLPGYQKRGEQCV). Intrachain disulfides connect Cys177–Cys190, Cys184–Cys199, Cys201–Cys212, Cys218–Cys228, Cys224–Cys237, Cys239–Cys252, Cys258–Cys268, Cys264–Cys277, Cys279–Cys292, Cys298–Cys309, Cys305–Cys318, Cys320–Cys332, Cys338–Cys350, Cys344–Cys359, and Cys365–Cys377. One can recognise an EGF-like 3; calcium-binding domain in the interval 214–253 (DIDECTVPPYCHQRCVNTPGSFYCQCSPGFQLAANNYTCV). The N-linked (GlcNAc...) asparagine glycan is linked to Asn249. The region spanning 254–293 (DINECDASNQCAQQCYNILGSFICQCNQGYELSSDRLNCE) is the EGF-like 4; calcium-binding domain. The segment at 259–493 (DASNQCAQQC…LTIIVGPFSF (235 aa)) is mediates interaction with TIMP3. Residues 294-333 (DIDECRTSSYLCQYQCVNEPGKFSCMCPQGYEVVRSRTCQ) form the EGF-like 5; calcium-binding domain. Positions 334–378 (DINECETTNECREDEMCWNYHGGFRCYPRNPCQDHYVLTSENRCV) constitute an EGF-like 6; calcium-binding domain.

It belongs to the fibulin family. In terms of assembly, interacts with ECM1. Interacts with TIMP3. As to expression, expressed in the eye in the ciliary body, cornea, inner nuclear layer of the retina, and in the optic disk.

The protein localises to the secreted. It is found in the extracellular space. The protein resides in the extracellular matrix. Binds EGFR, the EGF receptor, inducing EGFR autophosphorylation and the activation of downstream signaling pathways. May play a role in cell adhesion and migration. May function as a negative regulator of chondrocyte differentiation. In the olfactory epithelium, it may regulate glial cell migration, differentiation and the ability of glial cells to support neuronal neurite outgrowth. The chain is EGF-containing fibulin-like extracellular matrix protein 1 (Efemp1) from Mus musculus (Mouse).